We begin with the raw amino-acid sequence, 295 residues long: Protein FAM221A (295 aa).

A compositionally biased stretch (basic and acidic residues) spans 272–283; the sequence is QERLLKEKEQKR. The tract at residues 272–295 is disordered; sequence QERLLKEKEQKRQKNSKPPTTNRP.

Belongs to the FAM221 family.

The protein is Protein FAM221A (fam221a) of Xenopus tropicalis (Western clawed frog).